The primary structure comprises 418 residues: Oxalate:formate antiporter (418 aa).

12 helical membrane-spanning segments follow: residues 17 to 37, 48 to 68, 84 to 104, 108 to 128, 141 to 161, 172 to 192, 222 to 242, 250 to 270, 288 to 308, 311 to 331, 350 to 370, and 378 to 398; these read WFYL…QYSW, LGVS…IQAG, IPLM…GMVD, ALYA…GIAM, LASG…LPLI, AAFM…AFVI, FWVL…LVAN, LGLA…FNGG, MSVV…IAAL, VAFI…YALF, FFWA…AAIA, and AFLI…FVIP. K355 provides a ligand contact to oxalate.

It belongs to the major facilitator superfamily. OFA (TC 2.A.1.11) family. Monomer.

The protein localises to the cell inner membrane. In terms of biological role, anion transporter that carries out the exchange of divalent oxalate with monovalent formate, the product of oxalate decarboxylation, at the plasma membrane, and in doing so catalyzes the vectorial portion of a proton-motive metabolic cycle that drives ATP synthesis. The sequence is that of Oxalate:formate antiporter (oxlT) from Oxalobacter formigenes.